A 77-amino-acid chain; its full sequence is Omega-conotoxin-like SO-5 (77 aa).

The first 22 residues, 1-22, serve as a signal peptide directing secretion; it reads MKLTCVMIVAVLLLTACQLITA. A propeptide spanning residues 23–42 is cleaved from the precursor; that stretch reads DDSRGTQKHRSLRSTTKVSK. 3 disulfide bridges follow: Cys-46-Cys-61, Cys-53-Cys-64, and Cys-60-Cys-71.

The protein belongs to the conotoxin O1 superfamily. Expressed by the venom duct.

It localises to the secreted. Its function is as follows. Omega-conotoxins act at presynaptic membranes, they bind and block voltage-gated calcium channels (Cav). The protein is Omega-conotoxin-like SO-5 (SO5) of Conus striatus (Striated cone).